Reading from the N-terminus, the 723-residue chain is MSRKILVTNALPYANGDIHLGHLVGYIQGDIWVRFQRMRGNSVHYVCADDTHGTPIMLRAEKEGITPEQLIDRVHGEHLRDFTDFGVGFDHYHSTHSAENRAYAEEIYGKLLGAGFIETRSIEQFYDPVKEMFLPDRFIKGECPKCGAGDQYGDNCEVCGAAYAPTELKNPYSAVSGAKPVLRTSEHYFFRLSDPRAVEFLRDWTRGTNAGGERRLQAEAANKMKEWLGEAGENKLSDWDISRDAPYFGFEIPGAPGKYFYVWLDAPIGYLASFRHYAERRGDIAVADYTDAARAESHGTELVHFIGKDILYFHALFWPAMLKFAGYRTPTQLCVNGFLTVDGAKMSKSRGTFITARSYIVQGLNPEWLRYYFASKSNGTMEDVDLNLDDMIAKVNSDLVGKYVNIASRCAGFIAKRFDGKLGASDPKATADFESAYESAQIAQAYDERDYGRALREIMRLADLANQYVNDHKPWELAKQDGQDAQLHVVCSTALTLFRDLTLYLKPVLPGLAAKVEAFLALPPLQWNDSWKPLPAGHAITAYQHLMTRVERKQIDALLEANRESLAPAAATAPAKDAKPAKEAGSQQRHAEKQQHAAGVSETASPHISIDDFTKVDLRIAKIVDAQHVEGADKLIRLQLDIGETDEAGNPKPRQVFAGIKSAYDPATLVGRLTVMVANLAPRKMKFGMSEGMVLAASDPDGKTGGLYILAPDEGAQAGMRVK.

Residues 12–22 (PYANGDIHLGH) carry the 'HIGH' region motif. The Zn(2+) site is built by cysteine 143, cysteine 146, cysteine 156, and cysteine 159. Positions 345 to 349 (KMSKS) match the 'KMSKS' region motif. Position 348 (lysine 348) interacts with ATP. The disordered stretch occupies residues 568–604 (PAAATAPAKDAKPAKEAGSQQRHAEKQQHAAGVSETA). Residues 612–723 (DFTKVDLRIA…EGAQAGMRVK (112 aa)) form the tRNA-binding domain.

The protein belongs to the class-I aminoacyl-tRNA synthetase family. MetG type 1 subfamily. In terms of assembly, homodimer. Zn(2+) serves as cofactor.

Its subcellular location is the cytoplasm. The enzyme catalyses tRNA(Met) + L-methionine + ATP = L-methionyl-tRNA(Met) + AMP + diphosphate. In terms of biological role, is required not only for elongation of protein synthesis but also for the initiation of all mRNA translation through initiator tRNA(fMet) aminoacylation. This chain is Methionine--tRNA ligase, found in Azoarcus sp. (strain BH72).